The following is an 89-amino-acid chain: Defensin-like protein 147 (89 aa).

The signal sequence occupies residues 1-24 (MKKIFQLSFTVFIIFISLVLGVVG). 4 disulfide bridges follow: Cys-34–Cys-82, Cys-46–Cys-66, Cys-51–Cys-79, and Cys-55–Cys-81.

The protein belongs to the DEFL family. In terms of tissue distribution, expressed in flower buds, but not in stems, roots or rosette leaves.

It localises to the secreted. The chain is Defensin-like protein 147 (LCR1) from Arabidopsis thaliana (Mouse-ear cress).